Consider the following 177-residue polypeptide: Large ribosomal subunit protein uL6 (177 aa).

It belongs to the universal ribosomal protein uL6 family. As to quaternary structure, part of the 50S ribosomal subunit.

In terms of biological role, this protein binds to the 23S rRNA, and is important in its secondary structure. It is located near the subunit interface in the base of the L7/L12 stalk, and near the tRNA binding site of the peptidyltransferase center. The chain is Large ribosomal subunit protein uL6 from Bordetella avium (strain 197N).